A 574-amino-acid polypeptide reads, in one-letter code: Membralin (574 aa).

A disordered region spans residues 1–27; it reads MSEHAAAPGPGPNGGGGGGAAPVRGPR. Ser-2 is subject to N-acetylserine. A helical transmembrane segment spans residues 69–89; it reads FFVLLKALFVLFVLAYIHIVF. N-linked (GlcNAc...) asparagine glycosylation occurs at Asn-180. 3 helical membrane passes run 293–313, 337–357, and 417–437; these read TSYLAAFVIMVIFTLSVSMLL, IAFPAAPLLTVILALVGMEAI, and YSSLALVTSWLFIQHSMIYFF. Composition is skewed to low complexity over residues 461-470 and 491-501; these read LGPGTPTALP and LGPSSSPAPTG. Disordered stretches follow at residues 461–515 and 546–574; these read LGPG…GASV and RRPTAPSTPDSSRPDPGVPLEDAPAPAGS.

It belongs to the membralin family. In terms of assembly, interacts with ERLIN2. Detected in brain, spinal cord, lung, liver and kidney.

Its subcellular location is the endoplasmic reticulum membrane. May have a role in the ERAD pathway required for clearance of misfolded proteins in the endoplasmic reticulum (ER). Promotes survival of motor neurons, probably by protecting against ER stress. The protein is Membralin (Tmem259) of Mus musculus (Mouse).